We begin with the raw amino-acid sequence, 397 residues long: Bifunctional enzyme IspD/IspF (397 aa).

The segment at 1–236 (MSIAAIILAA…LKGMQIFPDI (236 aa)) is 2-C-methyl-D-erythritol 4-phosphate cytidylyltransferase. Residues 237 to 397 (RTGNGYDVHS…TVIYPGEIPK (161 aa)) form a 2-C-methyl-D-erythritol 2,4-cyclodiphosphate synthase region. The a divalent metal cation site is built by aspartate 243 and histidine 245. 4-CDP-2-C-methyl-D-erythritol 2-phosphate contacts are provided by residues 243-245 (DVH) and 269-270 (HS). Residue histidine 277 participates in a divalent metal cation binding. 4-CDP-2-C-methyl-D-erythritol 2-phosphate contacts are provided by residues 291-293 (DIG), 367-370 (TTNE), phenylalanine 374, and arginine 377.

This sequence in the N-terminal section; belongs to the IspD/TarI cytidylyltransferase family. IspD subfamily. It in the C-terminal section; belongs to the IspF family. A divalent metal cation serves as cofactor.

It carries out the reaction 2-C-methyl-D-erythritol 4-phosphate + CTP + H(+) = 4-CDP-2-C-methyl-D-erythritol + diphosphate. The enzyme catalyses 4-CDP-2-C-methyl-D-erythritol 2-phosphate = 2-C-methyl-D-erythritol 2,4-cyclic diphosphate + CMP. The protein operates within isoprenoid biosynthesis; isopentenyl diphosphate biosynthesis via DXP pathway; isopentenyl diphosphate from 1-deoxy-D-xylulose 5-phosphate: step 2/6. Its pathway is isoprenoid biosynthesis; isopentenyl diphosphate biosynthesis via DXP pathway; isopentenyl diphosphate from 1-deoxy-D-xylulose 5-phosphate: step 4/6. In terms of biological role, bifunctional enzyme that catalyzes the formation of 4-diphosphocytidyl-2-C-methyl-D-erythritol from CTP and 2-C-methyl-D-erythritol 4-phosphate (MEP) (IspD), and catalyzes the conversion of 4-diphosphocytidyl-2-C-methyl-D-erythritol 2-phosphate (CDP-ME2P) to 2-C-methyl-D-erythritol 2,4-cyclodiphosphate (ME-CPP) with a corresponding release of cytidine 5-monophosphate (CMP) (IspF). This chain is Bifunctional enzyme IspD/IspF, found in Bartonella bacilliformis (strain ATCC 35685 / KC583 / Herrer 020/F12,63).